Consider the following 272-residue polypeptide: Undecaprenyl-diphosphatase (272 aa).

7 consecutive transmembrane segments (helical) span residues Ser39 to Phe59, Trp87 to Ile107, Ser113 to Asp133, Ile145 to Val165, Phe188 to Leu208, Pro220 to Leu240, and Phe251 to Leu271.

Belongs to the UppP family.

It is found in the cell inner membrane. The catalysed reaction is di-trans,octa-cis-undecaprenyl diphosphate + H2O = di-trans,octa-cis-undecaprenyl phosphate + phosphate + H(+). In terms of biological role, catalyzes the dephosphorylation of undecaprenyl diphosphate (UPP). Confers resistance to bacitracin. The sequence is that of Undecaprenyl-diphosphatase from Trichlorobacter lovleyi (strain ATCC BAA-1151 / DSM 17278 / SZ) (Geobacter lovleyi).